The sequence spans 423 residues: Gamma-glutamyl phosphate reductase (423 aa).

It belongs to the gamma-glutamyl phosphate reductase family.

The protein localises to the cytoplasm. The catalysed reaction is L-glutamate 5-semialdehyde + phosphate + NADP(+) = L-glutamyl 5-phosphate + NADPH + H(+). Its pathway is amino-acid biosynthesis; L-proline biosynthesis; L-glutamate 5-semialdehyde from L-glutamate: step 2/2. Catalyzes the NADPH-dependent reduction of L-glutamate 5-phosphate into L-glutamate 5-semialdehyde and phosphate. The product spontaneously undergoes cyclization to form 1-pyrroline-5-carboxylate. The chain is Gamma-glutamyl phosphate reductase from Pseudomonas putida (strain ATCC 700007 / DSM 6899 / JCM 31910 / BCRC 17059 / LMG 24140 / F1).